The chain runs to 275 residues: Large ribosomal subunit protein uL2 (275 aa).

Disordered regions lie at residues 1-55 and 218-275; these read MGIR…RHRG and PHVR…RRRR. Positions 259–275 are enriched in basic residues; sequence TRNKKKASSRLIVRRRR.

This sequence belongs to the universal ribosomal protein uL2 family. In terms of assembly, part of the 50S ribosomal subunit. Forms a bridge to the 30S subunit in the 70S ribosome.

In terms of biological role, one of the primary rRNA binding proteins. Required for association of the 30S and 50S subunits to form the 70S ribosome, for tRNA binding and peptide bond formation. It has been suggested to have peptidyltransferase activity; this is somewhat controversial. Makes several contacts with the 16S rRNA in the 70S ribosome. In Crocosphaera subtropica (strain ATCC 51142 / BH68) (Cyanothece sp. (strain ATCC 51142)), this protein is Large ribosomal subunit protein uL2.